The sequence spans 377 residues: CaM kinase-like vesicle-associated protein (377 aa).

One can recognise a Protein kinase domain in the interval 24 to 287 (YDLGQLIKTE…AADAISHEWI (264 aa)). The interval 324 to 377 (MKRLRAPEQTDPGTPSPSKDSDKTPSMATPAPSPANTPAEGAPSLPCPSPDTTG) is disordered. Positions 347-362 (TPSMATPAPSPANTPA) are enriched in low complexity. The segment covering 368-377 (LPCPSPDTTG) has biased composition (pro residues).

Belongs to the protein kinase superfamily. CAMK Ser/Thr protein kinase family. In terms of assembly, interacts with calmodulin, in the presence of calcium. Ca(2+) serves as cofactor.

It is found in the cytoplasmic vesicle membrane. Its function is as follows. Does not appear to have detectable kinase activity. This is CaM kinase-like vesicle-associated protein (camkv) from Xenopus laevis (African clawed frog).